Here is a 571-residue protein sequence, read N- to C-terminus: MSTPGSSRSIPFKSKKRLVMDSPSSKSQTGNPNPSSVALPTPEKPLENMLSRSRNRSVALSVKEIRQAAGSRRRSEDPVASSAKSRLFFDSSSSSPSKRKSSNKNAEKEKLPEKYENLGKFFEALDNSMLLSKLRGSKPTFSNISKQIEHLTERRFCYSHLAQIKHILPEAIEIKRVLIHDETTCCMKPDLHVTLNADAVEYNDKSKSESKKIALRKVFRARLADFVKAHPQGDEVPEEPLPEPFNRRKPVENSNVEVKRVSSLMEEMASIPASKLFSSPITSTPVKTTSSLAKPTSSQINIAPTPTKPTSTPAKQTLSEINILPTPVKPVSTLAKFPSTPAIIDSTPVITATPPEFASTPARLMSTSLAARPLKRSNGHTNPDDISADPPTKLVRRSLSLNFDSYPEDERTMDFTDDIPIDQVPEEDVSSDDEILSILPDKLRHAIKEQERKAIEDQNPAISLAKRRRKMIACLPKLFNVIHYLIQSIRRWVITKEELVHKIIAGHSDITDRKEVEEQLILLQEIVPEWMSEKKSSSGDVLVCINKLASPLTIRSRLEEENKQEMAPLLS.

Residues 1–79 (MSTPGSSRSI…GSRRRSEDPV (79 aa)) constitute a chloroplast transit peptide. Disordered stretches follow at residues 1–110 (MSTP…EKEK) and 288–315 (TTSS…TPAK). The segment covering 22–38 (SPSSKSQTGNPNPSSVA) has biased composition (polar residues). The segment covering 81–96 (SSAKSRLFFDSSSSSP) has biased composition (low complexity). Positions 288-302 (TTSSLAKPTSSQINI) are enriched in polar residues. A compositionally biased stretch (low complexity) spans 303–315 (APTPTKPTSTPAK).

This sequence belongs to the Cdt1 family. In terms of assembly, binds to ARC6. Post-translationally, phosphorylated by cyclin D- and cyclin A-containing CDKA-1, and thus targeted to proteasome-mediated proteolysis. As to expression, expressed in proliferating (e.g. shoot and root apical meristems, organ primordia) and endoreplicating cells (e.g. guard cells and stomatal lineage, developing trichomes).

The protein resides in the plastid. It localises to the chloroplast. Functionally, member of the pre-replication complex. Component of the plastid division machinery. Promotes polyloidization and regulates endoreduplication. Involved in the coordination of cell and plastid division. This is CDT1-like protein a, chloroplastic (CDT1A) from Arabidopsis thaliana (Mouse-ear cress).